Consider the following 181-residue polypeptide: tRNA (cytidine(56)-2'-O)-methyltransferase (181 aa).

Residues Leu88, 115–119 (GGEKV), and 133–140 (IGNQPHSE) contribute to the S-adenosyl-L-methionine site.

It belongs to the aTrm56 family. As to quaternary structure, homodimer.

It is found in the cytoplasm. The enzyme catalyses cytidine(56) in tRNA + S-adenosyl-L-methionine = 2'-O-methylcytidine(56) in tRNA + S-adenosyl-L-homocysteine + H(+). Functionally, specifically catalyzes the AdoMet-dependent 2'-O-ribose methylation of cytidine at position 56 in tRNAs. This Thermofilum pendens (strain DSM 2475 / Hrk 5) protein is tRNA (cytidine(56)-2'-O)-methyltransferase.